Here is a 378-residue protein sequence, read N- to C-terminus: Queuine tRNA-ribosyltransferase (378 aa).

The Proton acceptor role is filled by Asp90. Substrate contacts are provided by residues 90-94 (DSGGY), Asp152, Gln194, and Gly223. The interval 254 to 260 (GVGKPED) is RNA binding. The active-site Nucleophile is Asp273. The RNA binding; important for wobble base 34 recognition stretch occupies residues 278 to 282 (TRNAR). Zn(2+) contacts are provided by Cys311, Cys313, Cys316, and His342.

It belongs to the queuine tRNA-ribosyltransferase family. As to quaternary structure, homodimer. Within each dimer, one monomer is responsible for RNA recognition and catalysis, while the other monomer binds to the replacement base PreQ1. Requires Zn(2+) as cofactor.

It catalyses the reaction 7-aminomethyl-7-carbaguanine + guanosine(34) in tRNA = 7-aminomethyl-7-carbaguanosine(34) in tRNA + guanine. The protein operates within tRNA modification; tRNA-queuosine biosynthesis. Functionally, catalyzes the base-exchange of a guanine (G) residue with the queuine precursor 7-aminomethyl-7-deazaguanine (PreQ1) at position 34 (anticodon wobble position) in tRNAs with GU(N) anticodons (tRNA-Asp, -Asn, -His and -Tyr). Catalysis occurs through a double-displacement mechanism. The nucleophile active site attacks the C1' of nucleotide 34 to detach the guanine base from the RNA, forming a covalent enzyme-RNA intermediate. The proton acceptor active site deprotonates the incoming PreQ1, allowing a nucleophilic attack on the C1' of the ribose to form the product. After dissociation, two additional enzymatic reactions on the tRNA convert PreQ1 to queuine (Q), resulting in the hypermodified nucleoside queuosine (7-(((4,5-cis-dihydroxy-2-cyclopenten-1-yl)amino)methyl)-7-deazaguanosine). The protein is Queuine tRNA-ribosyltransferase of Aquifex aeolicus (strain VF5).